The following is a 152-amino-acid chain: Large ribosomal subunit protein eL14 (152 aa).

Belongs to the eukaryotic ribosomal protein eL14 family.

This Lumbricus rubellus (Humus earthworm) protein is Large ribosomal subunit protein eL14 (RPL14).